A 255-amino-acid polypeptide reads, in one-letter code: tRNA pseudouridine synthase A (255 aa).

Residue Asp52 is the Nucleophile of the active site. Tyr111 serves as a coordination point for substrate.

This sequence belongs to the tRNA pseudouridine synthase TruA family. Homodimer.

It catalyses the reaction uridine(38/39/40) in tRNA = pseudouridine(38/39/40) in tRNA. In terms of biological role, formation of pseudouridine at positions 38, 39 and 40 in the anticodon stem and loop of transfer RNAs. In Nitrobacter winogradskyi (strain ATCC 25391 / DSM 10237 / CIP 104748 / NCIMB 11846 / Nb-255), this protein is tRNA pseudouridine synthase A.